The sequence spans 59 residues: Large ribosomal subunit protein bL32 (59 aa).

It belongs to the bacterial ribosomal protein bL32 family.

The chain is Large ribosomal subunit protein bL32 from Rhizorhabdus wittichii (strain DSM 6014 / CCUG 31198 / JCM 15750 / NBRC 105917 / EY 4224 / RW1) (Sphingomonas wittichii).